Here is a 359-residue protein sequence, read N- to C-terminus: Small ribosomal subunit biogenesis GTPase RsgA (359 aa).

Residues 101-259 (KRKGSQAIAS…LMDNPGIREV (159 aa)) form the CP-type G domain. GTP is bound by residues 149–152 (NKKD) and 201–209 (GSSGAGKST). Zn(2+)-binding residues include cysteine 284, cysteine 289, histidine 291, and cysteine 297. The segment at 331–359 (DPEEARKKKQKDKQMSKALQKRLKDKGRK) is disordered. Residues 349–359 (LQKRLKDKGRK) show a composition bias toward basic residues.

It belongs to the TRAFAC class YlqF/YawG GTPase family. RsgA subfamily. Monomer. Associates with 30S ribosomal subunit, binds 16S rRNA. It depends on Zn(2+) as a cofactor.

It localises to the cytoplasm. Its function is as follows. One of several proteins that assist in the late maturation steps of the functional core of the 30S ribosomal subunit. Helps release RbfA from mature subunits. May play a role in the assembly of ribosomal proteins into the subunit. Circularly permuted GTPase that catalyzes slow GTP hydrolysis, GTPase activity is stimulated by the 30S ribosomal subunit. This chain is Small ribosomal subunit biogenesis GTPase RsgA, found in Leptospira interrogans serogroup Icterohaemorrhagiae serovar Lai (strain 56601).